Here is a 435-residue protein sequence, read N- to C-terminus: Eukaryotic peptide chain release factor subunit 1-3 (435 aa).

Residue Ala-2 is modified to N-acetylalanine.

The protein belongs to the eukaryotic release factor 1 family. As to quaternary structure, heterodimer of two subunits, one of which binds GTP.

Its subcellular location is the cytoplasm. Its function is as follows. Directs the termination of nascent peptide synthesis (translation) in response to the termination codons UAA, UAG and UGA. Modulates plant growth and development. The sequence is that of Eukaryotic peptide chain release factor subunit 1-3 (ERF1-3) from Arabidopsis thaliana (Mouse-ear cress).